Here is a 236-residue protein sequence, read N- to C-terminus: 5'-methylthioadenosine/S-adenosylhomocysteine nucleosidase (236 aa).

The active-site Proton acceptor is the Glu12. Substrate-binding positions include Gly78, Ile153, and 174-175 (ME). Asp198 functions as the Proton donor in the catalytic mechanism.

Belongs to the PNP/UDP phosphorylase family. MtnN subfamily.

It catalyses the reaction S-adenosyl-L-homocysteine + H2O = S-(5-deoxy-D-ribos-5-yl)-L-homocysteine + adenine. The catalysed reaction is S-methyl-5'-thioadenosine + H2O = 5-(methylsulfanyl)-D-ribose + adenine. It carries out the reaction 5'-deoxyadenosine + H2O = 5-deoxy-D-ribose + adenine. The protein operates within amino-acid biosynthesis; L-methionine biosynthesis via salvage pathway; S-methyl-5-thio-alpha-D-ribose 1-phosphate from S-methyl-5'-thioadenosine (hydrolase route): step 1/2. Its function is as follows. Catalyzes the irreversible cleavage of the glycosidic bond in both 5'-methylthioadenosine (MTA) and S-adenosylhomocysteine (SAH/AdoHcy) to adenine and the corresponding thioribose, 5'-methylthioribose and S-ribosylhomocysteine, respectively. Also cleaves 5'-deoxyadenosine, a toxic by-product of radical S-adenosylmethionine (SAM) enzymes, into 5-deoxyribose and adenine. This chain is 5'-methylthioadenosine/S-adenosylhomocysteine nucleosidase, found in Shewanella baltica (strain OS155 / ATCC BAA-1091).